The chain runs to 431 residues: 3-phosphoshikimate 1-carboxyvinyltransferase (431 aa).

3-phosphoshikimate contacts are provided by K23, S24, and R28. K23 is a binding site for phosphoenolpyruvate. Phosphoenolpyruvate-binding residues include G96 and R124. The 3-phosphoshikimate site is built by S169, Q171, D317, and K344. Q171 is a phosphoenolpyruvate binding site. The active-site Proton acceptor is D317. 2 residues coordinate phosphoenolpyruvate: R348 and R390.

Belongs to the EPSP synthase family. Monomer.

It localises to the cytoplasm. It catalyses the reaction 3-phosphoshikimate + phosphoenolpyruvate = 5-O-(1-carboxyvinyl)-3-phosphoshikimate + phosphate. The protein operates within metabolic intermediate biosynthesis; chorismate biosynthesis; chorismate from D-erythrose 4-phosphate and phosphoenolpyruvate: step 6/7. Catalyzes the transfer of the enolpyruvyl moiety of phosphoenolpyruvate (PEP) to the 5-hydroxyl of shikimate-3-phosphate (S3P) to produce enolpyruvyl shikimate-3-phosphate and inorganic phosphate. The chain is 3-phosphoshikimate 1-carboxyvinyltransferase from Syntrophotalea carbinolica (strain DSM 2380 / NBRC 103641 / GraBd1) (Pelobacter carbinolicus).